Reading from the N-terminus, the 80-residue chain is Large ribosomal subunit protein bL28 (80 aa).

Residues 1 to 21 form a disordered region; sequence MSRICQITRKKSMKGNSVAHS.

Belongs to the bacterial ribosomal protein bL28 family.

The chain is Large ribosomal subunit protein bL28 from Azobacteroides pseudotrichonymphae genomovar. CFP2.